A 274-amino-acid polypeptide reads, in one-letter code: Cytochrome c oxidase subunit 3 (274 aa).

Residues 2-15 are Cytoplasmic-facing; it reads AHVKNHDYQILPPS. Residues 16–36 form a helical membrane-spanning segment; that stretch reads IWPFFGAIGAFVMLTGAVAWM. Over 37–48 the chain is Periplasmic; sequence KGITFFGLPVEG. Residues 49–77 form a helical membrane-spanning segment; that stretch reads PWMFLIGLVGVLYVMFGWWADVVNEGETG. At 78–79 the chain is on the cytoplasmic side; sequence EH. A helical membrane pass occupies residues 80-115; sequence TPVVRIGLQYGFILFIMSEVMFFVAWFWAFIKNALY. The Periplasmic portion of the chain corresponds to 116 to 139; that stretch reads PMGPDSPIKDGVWPPEGIVTFDPW. Residues 140–166 traverse the membrane as a helical segment; it reads HLPLINTLILLLSGVAVTWAHHAFVLE. At 167–168 the chain is on the cytoplasmic side; the sequence is GD. A helical transmembrane segment spans residues 169–197; it reads RKTTINGLIVAVILGVCFTGLQAYEYSHA. The Periplasmic portion of the chain corresponds to 198 to 203; the sequence is AFGLAD. Residues 204-237 form a helical membrane-spanning segment; sequence TVYAGAFYMATGFHGAHVIIGTIFLFVCLIRLLK. Topologically, residues 238–244 are cytoplasmic; the sequence is GQMTQKQ. The helical transmembrane segment at 245–274 threads the bilayer; the sequence is HVGFEAAAWYWHFVDVVWLFLFVVIYIWGR.

This sequence belongs to the cytochrome c oxidase subunit 3 family.

Its subcellular location is the cell inner membrane. It carries out the reaction 4 Fe(II)-[cytochrome c] + O2 + 8 H(+)(in) = 4 Fe(III)-[cytochrome c] + 2 H2O + 4 H(+)(out). The protein is Cytochrome c oxidase subunit 3 (ctaE) of Paracoccus denitrificans.